Here is a 272-residue protein sequence, read N- to C-terminus: Protein FAM210A (272 aa).

Positions 117–229 (DKSISLYQRF…GYMSTPPPVK (113 aa)) constitute a DUF1279 domain. A helical transmembrane segment spans residues 136-156 (VLIPVHLITSGVWFGTFYYAA). Positions 229–271 (KEYLQDRMEETKELITEKMEETKDRLTEKLQETKEKVSFKKKV) form a coiled coil. A disordered region spans residues 246–272 (KMEETKDRLTEKLQETKEKVSFKKKVE).

It belongs to the FAM210 family. As to quaternary structure, interacts with ATAD3A.

Its subcellular location is the membrane. It is found in the mitochondrion. The protein resides in the cytoplasm. May play a role in the structure and strength of both muscle and bone. This chain is Protein FAM210A (FAM210A), found in Homo sapiens (Human).